A 1227-amino-acid chain; its full sequence is DNA-directed RNA polymerase subunit beta (1227 aa).

It belongs to the RNA polymerase beta chain family. The RNAP catalytic core consists of 2 alpha, 1 beta, 1 beta' and 1 omega subunit. When a sigma factor is associated with the core the holoenzyme is formed, which can initiate transcription.

It catalyses the reaction RNA(n) + a ribonucleoside 5'-triphosphate = RNA(n+1) + diphosphate. In terms of biological role, DNA-dependent RNA polymerase catalyzes the transcription of DNA into RNA using the four ribonucleoside triphosphates as substrates. This is DNA-directed RNA polymerase subunit beta from Chloroflexus aurantiacus (strain ATCC 29366 / DSM 635 / J-10-fl).